The primary structure comprises 104 residues: MSYAIFKHGGKQYKVVEGDIVLLDKMDKEPKALVELVEVLAVSKEGKLSCGKPFVNGAKIEAEVINEGRGKKVITFKKRRRKDSKTKRGFRRDFTRVRITKIVA.

The protein belongs to the bacterial ribosomal protein bL21 family. In terms of assembly, part of the 50S ribosomal subunit. Contacts protein L20.

In terms of biological role, this protein binds to 23S rRNA in the presence of protein L20. The chain is Large ribosomal subunit protein bL21 from Helicobacter pylori (strain Shi470).